A 237-amino-acid polypeptide reads, in one-letter code: Leucyl/phenylalanyl-tRNA--protein transferase (237 aa).

This sequence belongs to the L/F-transferase family.

The protein localises to the cytoplasm. It catalyses the reaction N-terminal L-lysyl-[protein] + L-leucyl-tRNA(Leu) = N-terminal L-leucyl-L-lysyl-[protein] + tRNA(Leu) + H(+). The catalysed reaction is N-terminal L-arginyl-[protein] + L-leucyl-tRNA(Leu) = N-terminal L-leucyl-L-arginyl-[protein] + tRNA(Leu) + H(+). It carries out the reaction L-phenylalanyl-tRNA(Phe) + an N-terminal L-alpha-aminoacyl-[protein] = an N-terminal L-phenylalanyl-L-alpha-aminoacyl-[protein] + tRNA(Phe). Its function is as follows. Functions in the N-end rule pathway of protein degradation where it conjugates Leu, Phe and, less efficiently, Met from aminoacyl-tRNAs to the N-termini of proteins containing an N-terminal arginine or lysine. This chain is Leucyl/phenylalanyl-tRNA--protein transferase, found in Shewanella baltica (strain OS223).